The following is a 72-amino-acid chain: Long neurotoxin OH-17 (72 aa).

5 disulfides stabilise this stretch: C3–C21, C14–C42, C27–C31, C46–C57, and C58–C63.

The protein belongs to the three-finger toxin family. Long-chain subfamily. Type II alpha-neurotoxin sub-subfamily. Expressed by the venom gland.

The protein localises to the secreted. Functionally, binds with high affinity to muscular (alpha-1/CHRNA1) and neuronal (alpha-7/CHRNA7) nicotinic acetylcholine receptor (nAChR) and inhibits acetylcholine from binding to the receptor, thereby impairing neuromuscular and neuronal transmission. In Ophiophagus hannah (King cobra), this protein is Long neurotoxin OH-17.